The following is a 141-amino-acid chain: Cholinesterase (141 aa).

A glycan (N-linked (GlcNAc...) asparagine) is linked at Asn39. Residue 49–50 (GG) participates in substrate binding. Residue Ser131 is the Acyl-ester intermediate of the active site. Phosphoserine is present on Ser131.

This sequence belongs to the type-B carboxylesterase/lipase family. In terms of assembly, homotetramer; disulfide-linked. Dimer of dimers. As to expression, present in most cells except erythrocytes.

The protein localises to the secreted. It carries out the reaction an acylcholine + H2O = a carboxylate + choline + H(+). Its function is as follows. Esterase with broad substrate specificity. Contributes to the inactivation of the neurotransmitter acetylcholine. Can degrade neurotoxic organophosphate esters. This Sus scrofa (Pig) protein is Cholinesterase (BCHE).